Reading from the N-terminus, the 498-residue chain is Lysine--tRNA ligase (498 aa).

The Mg(2+) site is built by Glu408 and Glu415.

This sequence belongs to the class-II aminoacyl-tRNA synthetase family. As to quaternary structure, homodimer. The cofactor is Mg(2+).

It localises to the cytoplasm. The enzyme catalyses tRNA(Lys) + L-lysine + ATP = L-lysyl-tRNA(Lys) + AMP + diphosphate. The polypeptide is Lysine--tRNA ligase (Pediococcus pentosaceus (strain ATCC 25745 / CCUG 21536 / LMG 10740 / 183-1w)).